The primary structure comprises 540 residues: GMP synthase [glutamine-hydrolyzing] (540 aa).

The Glutamine amidotransferase type-1 domain maps to 26–216; the sequence is IIIILDFGSQ…VYHICECEPT (191 aa). Cys103 serves as the catalytic Nucleophile. Active-site residues include His190 and Glu192. Positions 217-415 constitute a GMPS ATP-PPase domain; that stretch reads WTTAAFVEEA…VGLPEEIVQR (199 aa). An ATP-binding site is contributed by 244–250; the sequence is SGGVDSS.

As to quaternary structure, homodimer.

It catalyses the reaction XMP + L-glutamine + ATP + H2O = GMP + L-glutamate + AMP + diphosphate + 2 H(+). It functions in the pathway purine metabolism; GMP biosynthesis; GMP from XMP (L-Gln route): step 1/1. In terms of biological role, catalyzes the synthesis of GMP from XMP. The polypeptide is GMP synthase [glutamine-hydrolyzing] (Trichormus variabilis (strain ATCC 29413 / PCC 7937) (Anabaena variabilis)).